Consider the following 281-residue polypeptide: 16S rRNA (guanine(1405)-N(7))-methyltransferase (281 aa).

Residues Tyr60, 105–107, Arg111, Gly136, Asp160, 186–187, Phe203, and Gln212 each bind S-adenosyl-L-methionine; these read HTS and QG.

It belongs to the methyltransferase superfamily. Aminoglycoside resistance family.

It carries out the reaction guanosine(1405) in 16S rRNA + S-adenosyl-L-methionine = N(7)-methylguanosine(1405) in 16S rRNA + S-adenosyl-L-homocysteine. Specifically methylates the N(7) position of guanine 1405 in 16S rRNA. Confers resistance to various aminoglycosides, including gentamicin and kanamycin. The sequence is that of 16S rRNA (guanine(1405)-N(7))-methyltransferase (rmtC) from Proteus mirabilis.